A 394-amino-acid polypeptide reads, in one-letter code: UDP-glucose 6-dehydrogenase (394 aa).

NAD(+) contacts are provided by residues 2–19 (KIAI…AVLL), V11, D29, K34, T83, T118, and E145. Residues 141 to 145 (EFLRE), K203, N207, 248 to 252 (YNNPS), and G256 contribute to the substrate site. Y258 lines the NAD(+) pocket. Residue C259 is the Nucleophile of the active site. K262 contacts NAD(+). K313 serves as a coordination point for substrate. Residue R320 participates in NAD(+) binding.

It belongs to the UDP-glucose/GDP-mannose dehydrogenase family.

The catalysed reaction is UDP-alpha-D-glucose + 2 NAD(+) + H2O = UDP-alpha-D-glucuronate + 2 NADH + 3 H(+). It participates in nucleotide-sugar biosynthesis; UDP-alpha-D-glucuronate biosynthesis; UDP-alpha-D-glucuronate from UDP-alpha-D-glucose: step 1/1. Functionally, catalyzes the formation of UDP-glucuronic acid which is required for capsular hyaluronic acid synthesis. Directly responsible for the transformation of some unencapsulated serotype-3 SP mutants to the encapsulated phenotype. The protein is UDP-glucose 6-dehydrogenase (cap3A) of Streptococcus pneumoniae.